Consider the following 554-residue polypeptide: Glucose-6-phosphate isomerase (554 aa).

Residue Glu359 is the Proton donor of the active site. Active-site residues include His390 and Lys518.

This sequence belongs to the GPI family.

Its subcellular location is the cytoplasm. The enzyme catalyses alpha-D-glucose 6-phosphate = beta-D-fructose 6-phosphate. Its pathway is carbohydrate biosynthesis; gluconeogenesis. It participates in carbohydrate degradation; glycolysis; D-glyceraldehyde 3-phosphate and glycerone phosphate from D-glucose: step 2/4. Catalyzes the reversible isomerization of glucose-6-phosphate to fructose-6-phosphate. This is Glucose-6-phosphate isomerase from Pseudomonas fluorescens (strain SBW25).